We begin with the raw amino-acid sequence, 104 residues long: ATP synthase subunit c (104 aa).

The next 2 helical transmembrane spans lie at 37–57 (LLGAGVAIIGVAGAGIGQGAV) and 83–103 (AGIAESGAIYALVVAILLIFV).

This sequence belongs to the ATPase C chain family. As to quaternary structure, F-type ATPases have 2 components, F(1) - the catalytic core - and F(0) - the membrane proton channel. F(1) has five subunits: alpha(3), beta(3), gamma(1), delta(1), epsilon(1). F(0) has three main subunits: a(1), b(2) and c(10-14). The alpha and beta chains form an alternating ring which encloses part of the gamma chain. F(1) is attached to F(0) by a central stalk formed by the gamma and epsilon chains, while a peripheral stalk is formed by the delta and b chains.

The protein resides in the cell membrane. Its function is as follows. F(1)F(0) ATP synthase produces ATP from ADP in the presence of a proton or sodium gradient. F-type ATPases consist of two structural domains, F(1) containing the extramembraneous catalytic core and F(0) containing the membrane proton channel, linked together by a central stalk and a peripheral stalk. During catalysis, ATP synthesis in the catalytic domain of F(1) is coupled via a rotary mechanism of the central stalk subunits to proton translocation. In terms of biological role, key component of the F(0) channel; it plays a direct role in translocation across the membrane. A homomeric c-ring of between 10-14 subunits forms the central stalk rotor element with the F(1) delta and epsilon subunits. The polypeptide is ATP synthase subunit c (Mesoplasma florum (strain ATCC 33453 / NBRC 100688 / NCTC 11704 / L1) (Acholeplasma florum)).